The sequence spans 522 residues: Solute carrier family 2, facilitated glucose transporter member 2 (522 aa).

Residues 1–10 (MSEDKITGTL) are Cytoplasmic-facing. A helical membrane pass occupies residues 11–31 (AFTVFTAVLGSFQFGYDIGVI). Residues 32–96 (NAPQEVIISH…SAHIVTMLWS (65 aa)) lie on the Extracellular side of the membrane. The N-linked (GlcNAc...) asparagine glycan is linked to N62. The helical transmembrane segment at 97–117 (LSVSSFAVGGMVASFFGGWLG) threads the bilayer. The Cytoplasmic segment spans residues 118 to 125 (DKLGRIKA). Residues 126-146 (MLAANSLSLTGALLMGCSKFG) traverse the membrane as a helical segment. Topologically, residues 147 to 156 (PAHALIIAGR) are extracellular. A helical membrane pass occupies residues 157-177 (SVSGLYCGLISGLVPMYIGEI). Topologically, residues 178-185 (APTTLRGA) are cytoplasmic. The helical transmembrane segment at 186–206 (LGTLHQLALVTGILISQIAGL) threads the bilayer. Q191 provides a ligand contact to D-glucose. The Extracellular portion of the chain corresponds to 207-215 (SFILGNQDY). A helical membrane pass occupies residues 216 to 236 (WHILLGLSAVPALLQCLLLLF). Residues 237–301 (CPESPRYLYL…LFTDPNYRQP (65 aa)) lie on the Cytoplasmic side of the membrane. Residues 302–322 (IVVALMLHLAQQFSGINGIFY) traverse the membrane as a helical segment. Residues 312–313 (QQ) and N318 each bind D-glucose. The Extracellular segment spans residues 323 to 337 (YSTSIFQTAGISQPV). The chain crosses the membrane as a helical span at residues 338 to 358 (YATIGVGAINMIFTAVSVLLV). D-glucose is bound at residue N347. Over 359 to 365 (EKAGRRT) the chain is Cytoplasmic. A helical transmembrane segment spans residues 366–386 (LFLAGMIGMFFCAVFMSLGLV). At 387–401 (LLDKFTWMSYVSMTA) the chain is on the extracellular side. A helical membrane pass occupies residues 402-422 (IFLFVSFFEIGPGPIPWFMVA). D-glucose is bound by residues E410 and W418. Topologically, residues 423–431 (EFFSQGPRP) are cytoplasmic. The helical transmembrane segment at 432–452 (TALALAAFSNWVCNFIIALCF) threads the bilayer. Over 453 to 459 (QYIADFL) the chain is Extracellular. Residues 460 to 480 (GPYVFFLFAGVVLVFTLFTFF) form a helical membrane-spanning segment. Over 481–522 (KVPETKGKSFDEIAAEFRKKSGSAPPRKATVQMEFLGSSETV) the chain is Cytoplasmic. A Phosphothreonine modification is found at T521.

Belongs to the major facilitator superfamily. Sugar transporter (TC 2.A.1.1) family. Glucose transporter subfamily. Post-translationally, N-glycosylated; required for stability and retention at the cell surface of pancreatic beta cells. As to expression, present in liver, intestine, kidney and beta-pancreatic islet cells.

It is found in the cell membrane. It carries out the reaction D-glucose(out) = D-glucose(in). The enzyme catalyses D-fructose(out) = D-fructose(in). The catalysed reaction is L-dehydroascorbate(out) = L-dehydroascorbate(in). It catalyses the reaction D-galactose(in) = D-galactose(out). With respect to regulation, D-glucose and maltose competitively inhibit fructose transport. D-glucose, D-fructose and maltose inhibit deoxyglucose transport. Its function is as follows. Facilitative hexose transporter that mediates the transport of glucose, fructose and galactose. Likely mediates the bidirectional transfer of glucose across the plasma membrane of hepatocytes and is responsible for uptake of glucose by the beta cells; may comprise part of the glucose-sensing mechanism of the beta cell. May also participate with the Na(+)/glucose cotransporter in the transcellular transport of glucose in the small intestine and kidney. Also able to mediate the transport of dehydroascorbate. The sequence is that of Solute carrier family 2, facilitated glucose transporter member 2 from Rattus norvegicus (Rat).